Reading from the N-terminus, the 80-residue chain is Small ribosomal subunit protein bS16 (80 aa).

Belongs to the bacterial ribosomal protein bS16 family.

This chain is Small ribosomal subunit protein bS16, found in Laribacter hongkongensis (strain HLHK9).